We begin with the raw amino-acid sequence, 143 residues long: Putative pre-16S rRNA nuclease (143 aa).

The protein belongs to the YqgF nuclease family.

It localises to the cytoplasm. Could be a nuclease involved in processing of the 5'-end of pre-16S rRNA. In Mesomycoplasma hyopneumoniae (strain 232) (Mycoplasma hyopneumoniae), this protein is Putative pre-16S rRNA nuclease.